We begin with the raw amino-acid sequence, 312 residues long: 2,3-dihydroxyphenylpropionate/2,3-dihydroxicinnamic acid 1,2-dioxygenase 1 (312 aa).

The active-site Proton donor is the H115. The Proton acceptor role is filled by H179.

Belongs to the LigB/MhpB extradiol dioxygenase family. As to quaternary structure, homotetramer. It depends on Fe(2+) as a cofactor.

It carries out the reaction 3-(2,3-dihydroxyphenyl)propanoate + O2 = (2Z,4E)-2-hydroxy-6-oxonona-2,4-dienedioate + H(+). It catalyses the reaction (2E)-3-(2,3-dihydroxyphenyl)prop-2-enoate + O2 = (2Z,4E,7E)-2-hydroxy-6-oxonona-2,4,7-trienedioate + H(+). Its pathway is aromatic compound metabolism; 3-phenylpropanoate degradation. Catalyzes the non-heme iron(II)-dependent oxidative cleavage of 2,3-dihydroxyphenylpropionic acid and 2,3-dihydroxicinnamic acid into 2-hydroxy-6-ketononadienedioate and 2-hydroxy-6-ketononatrienedioate, respectively. The protein is 2,3-dihydroxyphenylpropionate/2,3-dihydroxicinnamic acid 1,2-dioxygenase 1 of Dechloromonas aromatica (strain RCB).